The following is a 654-amino-acid chain: MPLKWKTSSPAIWKFPVPVLKTSRSTPLSPAYISLVEEEDQHLKLCLGSEMGLSSHLQSCKAGSTRIFTSNSHSSVVLQGFDQLRLDGLLCDVTLMPGDTDDAYPVHRVMMASASDYFKAMFTGGMKEQELMCIKLHGVSRVGLRKIIDFIYTAKLSLNMDTLQDTLEAASFLQILPVLDFCKVFLISGVTLDNCVEVGRIANTYHLTEVDKYVNSFVLKNFAALLSTGEFLKLPFERLAFVLSSNSLKRCTELDLFKATCRWLRLEEPRMDVAAKLMKNIRFPLMTPQELINYVQTVDFMRTDNTCVNLLLEASNYQMMPFMQPVMQSDRTAIRSDTTRLVTLGGVLRQQLVVSKELRMYDEKTHEWKSLAPMDAPRYQHGIAVIGNFLYVVGGQSNYDTKGKTAVDTVFRFDPRYNKWIQVASLNEKRTFFHLSALKGFLYAVGGRNAAGELPTVECYNPRTNEWTYVAKMNEPHYGHAGTVYGGVMYISGGITHDTFQKELMCFDPDTDKWTQKAPMTTVRGLHCMCTVGDRLYVIGGNHFRGTSDYDDVLSCEYYSPILDQWTPIASMLRGQSDVGVAVFENKIYVVGGYSWNNRCMVEIVQKYDPEKNEWHKVFDLPESLGGIRACTLTVYPPEEATPSPSRESPLSGP.

A BTB domain is found at 91–160 (CDVTLMPGDT…IYTAKLSLNM (70 aa)). Residues 195–296 (CVEVGRIANT…TPQELINYVQ (102 aa)) form the BACK domain. 6 Kelch repeats span residues 340-388 (RLVT…VIGN), 389-440 (FLYV…ALKG), 441-487 (FLYA…VYGG), 489-534 (MYIS…TVGD), 536-586 (LYVI…VFEN), and 587-635 (KIYV…TLTV).

Component of the BCR(KLHL9-KLHL13) E3 ubiquitin ligase complex, at least composed of CUL3, KLHL9, KLHL13 and RBX1. Interacts with AURKB.

Its pathway is protein modification; protein ubiquitination. In terms of biological role, substrate-specific adapter of a BCR (BTB-CUL3-RBX1) E3 ubiquitin-protein ligase complex required for mitotic progression and cytokinesis. The BCR(KLHL9-KLHL13) E3 ubiquitin ligase complex mediates the ubiquitination of AURKB and controls the dynamic behavior of AURKB on mitotic chromosomes and thereby coordinates faithful mitotic progression and completion of cytokinesis. This chain is Kelch-like protein 13 (Klhl13), found in Mus musculus (Mouse).